A 368-amino-acid chain; its full sequence is Germination protease (368 aa).

Residues M1–D16 constitute a propeptide that is removed on maturation.

This sequence belongs to the peptidase A25 family. Homotetramer. In terms of processing, autoproteolytically processed. The inactive tetrameric zymogen termed p46 autoprocesses to a smaller form termed p41, which is active only during spore germination.

It catalyses the reaction Endopeptidase action with P4 Glu or Asp, P1 preferably Glu &gt; Asp, P1' hydrophobic and P2' Ala.. Its function is as follows. Initiates the rapid degradation of small, acid-soluble proteins during spore germination. This is Germination protease from Bacillus licheniformis (strain ATCC 14580 / DSM 13 / JCM 2505 / CCUG 7422 / NBRC 12200 / NCIMB 9375 / NCTC 10341 / NRRL NRS-1264 / Gibson 46).